A 74-amino-acid polypeptide reads, in one-letter code: MQTAYWVMVMMMVWITAPLSEGGKLNGEIRGLVSHILIPQHTLRSLTSRDRSDNGGSSGAQICIWKVCPPSPWR.

The N-terminal stretch at 1 to 22 is a signal peptide; the sequence is MQTAYWVMVMMMVWITAPLSEG. Residues 23–57 constitute a propeptide that is removed on maturation; it reads GKLNGEIRGLVSHILIPQHTLRSLTSRDRSDNGGS. C63 and C68 form a disulfide bridge. Residue W65 is modified to D-tryptophan. P69, P70, and P72 each carry 4-hydroxyproline.

Belongs to the conotoxin C superfamily. Consomatin family. As to expression, expressed by the venom duct.

It is found in the secreted. Functionally, moderately activates human somatostatin receptors (SSTR) with a preferential activation of SSTR1 and SSTR4. In vivo, does not cause behavioral changes in mice within a few minutes of intracranial injection, but causes a progressive loss of movement thereafter. Four to five hours after injection, mice recover, even with the highest dose tested. Shows antinociception and antihyperalgesia activities in two mouse models of acute pain, most probably by acting outside the central nervous system. In Conus magus (Magical cone), this protein is Consomatin Ma1.